The following is a 408-amino-acid chain: GTPase Obg (408 aa).

Residues 1–159 (MKFVDEVSIR…RDLKMEMKVL (159 aa)) form the Obg domain. Positions 127–148 (NTRFKSSTNRAPRQTTPGKPGE) are disordered. The span at 129–143 (RFKSSTNRAPRQTTP) shows a compositional bias: polar residues. In terms of domain architecture, OBG-type G spans 160 to 333 (ADVGLLGLPN…LSHDLMRYLE (174 aa)). GTP is bound by residues 166-173 (GLPNAGKS), 191-195 (FTTLV), 213-216 (DIPG), 283-286 (NKAD), and 314-316 (SAI). S173 and T193 together coordinate Mg(2+). Acidic residues predominate over residues 385–401 (GDDDGWDDDFEDDEDGP). The tract at residues 385–408 (GDDDGWDDDFEDDEDGPEIIYVRD) is disordered.

Belongs to the TRAFAC class OBG-HflX-like GTPase superfamily. OBG GTPase family. Monomer. Requires Mg(2+) as cofactor.

The protein resides in the cytoplasm. In terms of biological role, an essential GTPase which binds GTP, GDP and possibly (p)ppGpp with moderate affinity, with high nucleotide exchange rates and a fairly low GTP hydrolysis rate. Plays a role in control of the cell cycle, stress response, ribosome biogenesis and in those bacteria that undergo differentiation, in morphogenesis control. The polypeptide is GTPase Obg (Pseudomonas putida (strain ATCC 700007 / DSM 6899 / JCM 31910 / BCRC 17059 / LMG 24140 / F1)).